The sequence spans 262 residues: Short-chain reductase protein NovJ (262 aa).

NADP(+) contacts are provided by residues 23–26 and 73–74; these read GAGR and DV. A substrate-binding site is contributed by S152. Y164 serves as the catalytic Proton acceptor. Residue 164–168 coordinates NADP(+); the sequence is YATAK.

It belongs to the short-chain dehydrogenases/reductases (SDR) family. As to quaternary structure, heterotetramer; the NovJ(2)K(2) heterotetramer is composed of subunits of 2 NovJ and 2 subunits of NovK.

It functions in the pathway antibiotic biosynthesis; novobiocin biosynthesis. Its function is as follows. Catalytic subunit of the NovJ(2)K(2) heterotetramer that catalyzes the NADPH-dependent reduction of the tyrosyl moiety of L-beta-OH-Tyr-S-NovH intermediate to yield the tethered beta-ketotyrosyl-S-NovH in the novobiocin biosynthesis pathway. Novobiocin is an aminocoumarin family antibiotic that targets bacterial DNA gyrases. The protein is Short-chain reductase protein NovJ (novJ) of Streptomyces niveus (Streptomyces spheroides).